A 306-amino-acid polypeptide reads, in one-letter code: Pantothenate kinase (306 aa).

90 to 97 contributes to the ATP binding site; sequence GSVAVGKS.

It belongs to the prokaryotic pantothenate kinase family.

Its subcellular location is the cytoplasm. The catalysed reaction is (R)-pantothenate + ATP = (R)-4'-phosphopantothenate + ADP + H(+). The protein operates within cofactor biosynthesis; coenzyme A biosynthesis; CoA from (R)-pantothenate: step 1/5. This Listeria monocytogenes serotype 4b (strain CLIP80459) protein is Pantothenate kinase.